The chain runs to 115 residues: MTRVKRGYVARRRRKKILHLTSGFYGAHSRLFRVANQKAIRALAYSHIDRAKRKRNMRSLWICRINAVAREQNISYSYLIKSLKEKKILLNRKMLAQLAVLDKPSFIKLINTHLN.

It belongs to the bacterial ribosomal protein bL20 family.

It localises to the plastid. Its subcellular location is the chloroplast. Functionally, binds directly to 23S ribosomal RNA and is necessary for the in vitro assembly process of the 50S ribosomal subunit. It is not involved in the protein synthesizing functions of that subunit. This chain is Large ribosomal subunit protein bL20c, found in Chaetosphaeridium globosum (Charophycean green alga).